Reading from the N-terminus, the 709-residue chain is Polyribonucleotide nucleotidyltransferase (709 aa).

2 residues coordinate Mg(2+): D490 and D496. Residues 557-616 (PKVITMRVLPEKIPVIIGPSGKNIKKIIDETGVKIDLDQEGLVRIYAVDGESADKAKEMI) enclose the KH domain. Positions 626-694 (GEVYMGKVTR…EMGRAKVSLK (69 aa)) constitute an S1 motif domain.

This sequence belongs to the polyribonucleotide nucleotidyltransferase family. Mg(2+) serves as cofactor.

The protein localises to the cytoplasm. The catalysed reaction is RNA(n+1) + phosphate = RNA(n) + a ribonucleoside 5'-diphosphate. Its function is as follows. Involved in mRNA degradation. Catalyzes the phosphorolysis of single-stranded polyribonucleotides processively in the 3'- to 5'-direction. The sequence is that of Polyribonucleotide nucleotidyltransferase from Persephonella marina (strain DSM 14350 / EX-H1).